Consider the following 840-residue polypeptide: Urease (840 aa).

The region spanning 402-840 is the Urease domain; sequence GAIDCHVHYI…VPLSRNYFLF (439 aa). Ni(2+)-binding residues include H407, H409, and K490. Residue K490 is modified to N6-carboxylysine. H492 contributes to the substrate binding site. Ni(2+)-binding residues include H519 and H545. H593 acts as the Proton donor in catalysis. D633 provides a ligand contact to Ni(2+).

In the C-terminal section; belongs to the metallo-dependent hydrolases superfamily. Urease alpha subunit family. In terms of assembly, homohexamer. Other oligomeric forms may exist depending on pH and presence of salts. The cofactor is Ni cation. Carboxylation allows a single lysine to coordinate two nickel ions.

It carries out the reaction urea + 2 H2O + H(+) = hydrogencarbonate + 2 NH4(+). It participates in nitrogen metabolism; urea degradation; CO(2) and NH(3) from urea (urease route): step 1/1. P-hydroxymercuribenzoate irreversibly abolishes ureolytic activity, but does not inhibit the ability to activate platelets. Also inhibited by acetohydroxamic acid (AHA), a chelator of Ni2+ and Zn2+ ions. Its function is as follows. Urea hydrolase involved in nitrogen recycling from ureide, purine, and arginine catabolism. Is known to be highly toxic and lethal when given by intravenous route, producing convulsions and other signs of central nervous system intoxication associated with the high levels of ammonia formed in the blood of mice and rabbits. Is neurotoxic in mammals, when directly injected into hippocampus. It may induce seizures by acting at a neuronal network level, thereby disturbing electroencephalographic rhythms and causing metabolic alterations in key areas related to epileptogenesis and to neurogenic pulmonary edema. It increases calcium influx and neuronal firing rate in the hippocampus. Is able to insert itself into lipid bilayers, altering physicochemical properties of artificial membranes, and forming cation-selective ion channels. In vitro, has the ability to induce platelet aggregation, platelet granules secretion and release of ATP. In contrast to canatoxin, another urease from C.ensiformis, is not lethal to mice when intraperitoneally injected. This is Urease from Canavalia ensiformis (Jack bean).